The following is a 448-amino-acid chain: Zinc finger and BTB domain-containing protein 44 (448 aa).

A BTB domain is found at 31–98; the sequence is CDITIRVQDK…AYTATLSINT (68 aa). Positions 289-298 are enriched in basic and acidic residues; it reads LSDEEVHEEV. Residues 289-320 form a disordered region; the sequence is LSDEEVHEEVSQPVSASQSSMSDQQTVPGSEQ. The segment covering 299–313 has biased composition (low complexity); sequence SQPVSASQSSMSDQQ. 2 C2H2-type zinc fingers span residues 394–416 and 422–444; these read FQCPTCGVRFTRIQNLKQHMLIH and FQCDRCGKKFTRAYSLKMHRLKH.

It is found in the nucleus. This is Zinc finger and BTB domain-containing protein 44 (zbtb44) from Xenopus tropicalis (Western clawed frog).